The sequence spans 70 residues: DNA gyrase inhibitor YacG (70 aa).

Residues C7, C10, C26, and C30 each contribute to the Zn(2+) site.

It belongs to the DNA gyrase inhibitor YacG family. In terms of assembly, interacts with GyrB. Zn(2+) serves as cofactor.

Functionally, inhibits all the catalytic activities of DNA gyrase by preventing its interaction with DNA. Acts by binding directly to the C-terminal domain of GyrB, which probably disrupts DNA binding by the gyrase. This Shewanella woodyi (strain ATCC 51908 / MS32) protein is DNA gyrase inhibitor YacG.